The following is a 128-amino-acid chain: Large ribosomal subunit protein bL20 (128 aa).

This sequence belongs to the bacterial ribosomal protein bL20 family.

Functionally, binds directly to 23S ribosomal RNA and is necessary for the in vitro assembly process of the 50S ribosomal subunit. It is not involved in the protein synthesizing functions of that subunit. The sequence is that of Large ribosomal subunit protein bL20 from Micrococcus luteus (strain ATCC 4698 / DSM 20030 / JCM 1464 / CCM 169 / CCUG 5858 / IAM 1056 / NBRC 3333 / NCIMB 9278 / NCTC 2665 / VKM Ac-2230) (Micrococcus lysodeikticus).